The following is a 330-amino-acid chain: Erlin-2-B (330 aa).

At 1 to 2 (MS) the chain is on the cytoplasmic side. The chain crosses the membrane as a helical span at residues 3 to 23 (HAGAIAALGVALIAAALFSAI). Over 24–330 (HKIEEGHVGV…NEPAAAEELK (307 aa)) the chain is Lumenal. Residue Asn-106 is glycosylated (N-linked (GlcNAc...) asparagine). Positions 308–330 (SSSAGPRVQSAKRNEPAAAEELK) are disordered. Basic and acidic residues predominate over residues 319–330 (KRNEPAAAEELK).

It belongs to the band 7/mec-2 family.

Its subcellular location is the endoplasmic reticulum membrane. Mediates the endoplasmic reticulum-associated degradation (ERAD) of inositol 1,4,5-trisphosphate receptors (IP3Rs). Promotes sterol-accelerated ERAD of HMGCR. Involved in regulation of cellular cholesterol homeostasis by regulation the SREBP signaling pathway. The polypeptide is Erlin-2-B (erlin2-b) (Xenopus laevis (African clawed frog)).